Here is a 381-residue protein sequence, read N- to C-terminus: Gas vesicle protein C (381 aa).

A run of 7 repeats spans residues 22-59, 60-84, 85-122, 123-160, 161-192, 193-232, and 233-274. Residues 22 to 274 are 7 X approximate tandem repeats; it reads QAFAAYADEF…TETEVDIPPI (253 aa). Residues 261–333 are disordered; that stretch reads AVTGTETEVD…EDDQFLDDET (73 aa). Over residues 276-318 the composition is skewed to acidic residues; the sequence is DSVEPDGEDEDSKADDVEAEAEVETVEMEFGAEMDTEADEDVQ.

This sequence belongs to the halobacterial gas vesicle GvpC family. In terms of processing, detected as 2 slightly different sizes in vivo; the proteins appears larger in SDS-PAGE probably due to the acidic tail.

The protein resides in the gas vesicle. Functionally, confers stability, involved in shaping gas vesicles (GV), hollow, gas filled proteinaceous nanostructures found in some microorganisms. They allow positioning of halobacteria at the optimal depth for growth in the poorly aerated, shallow brine pools of their habitat. Expression of a 9.5 kb mc-vac DNA fragment containing 2 divergently transcribed regions (gvpD-gvpE-gvpF-gvpG-gvpH-gvpI-gvpJ-gvpK-gvpL-gvpM and gvpA-gvpC-gvpN-gvpO) allows H.volcanii to produce gas vesicles. In Haloferax mediterranei (strain ATCC 33500 / DSM 1411 / JCM 8866 / NBRC 14739 / NCIMB 2177 / R-4) (Halobacterium mediterranei), this protein is Gas vesicle protein C.